A 203-amino-acid polypeptide reads, in one-letter code: Imidazoleglycerol-phosphate dehydratase (203 aa).

Belongs to the imidazoleglycerol-phosphate dehydratase family.

The protein localises to the cytoplasm. It catalyses the reaction D-erythro-1-(imidazol-4-yl)glycerol 3-phosphate = 3-(imidazol-4-yl)-2-oxopropyl phosphate + H2O. It functions in the pathway amino-acid biosynthesis; L-histidine biosynthesis; L-histidine from 5-phospho-alpha-D-ribose 1-diphosphate: step 6/9. The chain is Imidazoleglycerol-phosphate dehydratase from Synechococcus sp. (strain RCC307).